A 37-amino-acid chain; its full sequence is Large ribosomal subunit protein bL36 (37 aa).

Belongs to the bacterial ribosomal protein bL36 family.

This chain is Large ribosomal subunit protein bL36, found in Treponema pallidum (strain Nichols).